Reading from the N-terminus, the 267-residue chain is Dihydropteroate synthase (267 aa).

Positions 1–251 (MTKTKIMGIL…NVELNAKLAK (251 aa)) constitute a Pterin-binding domain. Position 11 (asparagine 11) interacts with Mg(2+). Residues threonine 51, aspartate 84, asparagine 103, aspartate 167, lysine 203, and 239–241 (RVH) contribute to the (7,8-dihydropterin-6-yl)methyl diphosphate site.

Belongs to the DHPS family. In terms of assembly, homodimer. Requires Mg(2+) as cofactor.

It catalyses the reaction (7,8-dihydropterin-6-yl)methyl diphosphate + 4-aminobenzoate = 7,8-dihydropteroate + diphosphate. It participates in cofactor biosynthesis; tetrahydrofolate biosynthesis; 7,8-dihydrofolate from 2-amino-4-hydroxy-6-hydroxymethyl-7,8-dihydropteridine diphosphate and 4-aminobenzoate: step 1/2. In terms of biological role, catalyzes the condensation of para-aminobenzoate (pABA) with 6-hydroxymethyl-7,8-dihydropterin diphosphate (DHPt-PP) to form 7,8-dihydropteroate (H2Pte), the immediate precursor of folate derivatives. The sequence is that of Dihydropteroate synthase (folP) from Staphylococcus aureus (strain Mu50 / ATCC 700699).